The chain runs to 169 residues: MIVITTRTGAMTGFPLSRHDIRIALHSMLSCLGLSGAHVEVILTDDGESAQLNREFLGCYGPTNILSFPAAGPVAAPRQEPDSPPACRKDSSHAEDDTDLGVLALSTGAVHRESFLYGQPPHRHALRLLAHGLLHLAGYDHGPQMDDMTETLMQCATGKAAADTVVTGF.

The interval 72–95 (GPVAAPRQEPDSPPACRKDSSHAE) is disordered. Positions 131, 135, and 141 each coordinate Zn(2+).

It belongs to the endoribonuclease YbeY family. Zn(2+) is required as a cofactor.

Its subcellular location is the cytoplasm. Functionally, single strand-specific metallo-endoribonuclease involved in late-stage 70S ribosome quality control and in maturation of the 3' terminus of the 16S rRNA. The chain is Endoribonuclease YbeY from Oleidesulfovibrio alaskensis (strain ATCC BAA-1058 / DSM 17464 / G20) (Desulfovibrio alaskensis).